Consider the following 563-residue polypeptide: Dihydroxy-acid dehydratase (563 aa).

Cys51 provides a ligand contact to [2Fe-2S] cluster. Position 83 (Asp83) interacts with Mg(2+). Cys124 provides a ligand contact to [2Fe-2S] cluster. Positions 125 and 126 each coordinate Mg(2+). The residue at position 126 (Lys126) is an N6-carboxylysine. Residue Cys196 participates in [2Fe-2S] cluster binding. Glu448 serves as a coordination point for Mg(2+). Ser474 functions as the Proton acceptor in the catalytic mechanism.

This sequence belongs to the IlvD/Edd family. In terms of assembly, homodimer. Requires [2Fe-2S] cluster as cofactor. Mg(2+) is required as a cofactor.

It catalyses the reaction (2R)-2,3-dihydroxy-3-methylbutanoate = 3-methyl-2-oxobutanoate + H2O. It carries out the reaction (2R,3R)-2,3-dihydroxy-3-methylpentanoate = (S)-3-methyl-2-oxopentanoate + H2O. It participates in amino-acid biosynthesis; L-isoleucine biosynthesis; L-isoleucine from 2-oxobutanoate: step 3/4. Its pathway is amino-acid biosynthesis; L-valine biosynthesis; L-valine from pyruvate: step 3/4. Functions in the biosynthesis of branched-chain amino acids. Catalyzes the dehydration of (2R,3R)-2,3-dihydroxy-3-methylpentanoate (2,3-dihydroxy-3-methylvalerate) into 2-oxo-3-methylpentanoate (2-oxo-3-methylvalerate) and of (2R)-2,3-dihydroxy-3-methylbutanoate (2,3-dihydroxyisovalerate) into 2-oxo-3-methylbutanoate (2-oxoisovalerate), the penultimate precursor to L-isoleucine and L-valine, respectively. This Polynucleobacter necessarius subsp. necessarius (strain STIR1) protein is Dihydroxy-acid dehydratase.